The following is a 613-amino-acid chain: Epsin-2 (613 aa).

One can recognise an ENTH domain in the interval 11–143; sequence NMMKGYSSTQ…NDEERLREER (133 aa). 3 disordered regions span residues 140–208, 323–351, and 356–375; these read REER…DDED, TAANMQQQQQQPADFQQPLPTGSNNPFSM, and RQKQEQQHAQLQRQQEEARQ. Residues 148–167 are compositionally biased toward basic residues; it reads RNRRANRAARPRPRRQRTRS. Position 165 is a phosphothreonine (threonine 165). Serine 167 is subject to Phosphoserine. 2 UIM domains span residues 175–194 and 206–225; these read SYQDDLEKALEESRITAQED and DEDPDFQAALQLSKEEEELK. Residues 179–188 show a composition bias toward basic and acidic residues; it reads DLEKALEESR. The span at 323-339 shows a compositional bias: low complexity; it reads TAANMQQQQQQPADFQQ. The span at 340–350 shows a compositional bias: polar residues; the sequence is PLPTGSNNPFS. Lysine 426 participates in a covalent cross-link: Glycyl lysine isopeptide (Lys-Gly) (interchain with G-Cter in ubiquitin). Residue threonine 430 is modified to Phosphothreonine. Serine 434 carries the post-translational modification Phosphoserine. Threonine 450, threonine 468, and threonine 470 each carry phosphothreonine. The span at 471 to 512 shows a compositional bias: polar residues; the sequence is GTFINSQGTGYKQVTNEPKNNPFLSNQYTGLPSTNIVPTQTG. The interval 471-613 is disordered; sequence GTFINSQGTG…PDQGVSLIDL (143 aa). Residues 526–600 show a composition bias toward low complexity; it reads SPQQNPTGIS…QQQQQQQQQQ (75 aa).

Belongs to the epsin family. In terms of processing, phosphorylated by PRK1.

It localises to the cytoplasm. The protein resides in the membrane. Its function is as follows. Binds to membranes enriched in phosphatidylinositol 3,5-bisphosphate (PtdIns(3,5)P2) and phosphatidylinositol 4,5-bisphosphate (PtdIns(4,5)P2). Required for endocytosis and localization of actin. The chain is Epsin-2 (ENT2) from Saccharomyces cerevisiae (strain ATCC 204508 / S288c) (Baker's yeast).